Reading from the N-terminus, the 172-residue chain is Auxin-responsive protein IAA30 (172 aa).

The span at 1-18 shows a compositional bias: low complexity; that stretch reads MGRGRSSSSSSIESSCKS. The interval 1-28 is disordered; that stretch reads MGRGRSSSSSSIESSCKSNPFGVSSSNT. The EAR-like (transcriptional repression) motif lies at 35 to 39; sequence LRLGL. One can recognise a PB1 domain in the interval 82 to 171; that stretch reads SFYVKVNMEG…RRLKISRAYH (90 aa).

It belongs to the Aux/IAA family. In terms of assembly, homodimers and heterodimers.

It is found in the nucleus. Its function is as follows. Aux/IAA proteins are short-lived transcriptional factors that function as repressors of early auxin response genes at low auxin concentrations. Repression is thought to result from the interaction with auxin response factors (ARFs), proteins that bind to the auxin-responsive promoter element (AuxRE). Formation of heterodimers with ARF proteins may alter their ability to modulate early auxin response genes expression. The protein is Auxin-responsive protein IAA30 (IAA30) of Arabidopsis thaliana (Mouse-ear cress).